The following is a 203-amino-acid chain: Calcineurin B-like protein 5 (203 aa).

Residue Gly2 is the site of N-myristoyl glycine attachment. 4 EF-hand domains span residues 30–65 (EVEVLHGLFIKLTSCLSNDNLLTKEKFQFILIKNTK), 66–101 (KRSLSAERIFGLFDMRNDGAIDFGEFVHTLNIFHPN), 103–138 (SPRDKAIFAFRLYDTRETGFIEPEEVKEMIIDVLEE), and 147–182 (IIDSIVSKTFEEADWKKDGIIDLEEWENFVATYPLT).

The protein belongs to the calcineurin regulatory subunit family. In terms of assembly, homodimer. Interacts with PP2CA, CIPK2, CIPK11, CIPK23 and CIPK24. Both N-myristoylation and calcium-mediated conformational changes are essential for its function. In terms of tissue distribution, expressed in green tissues, but not in the roots.

The protein resides in the cytoplasm. The protein localises to the nucleus. Acts as a calcium sensor. CBL proteins interact with CIPK serine-threonine protein kinases. Binding of a CBL protein to the regulatory NAF domain of a CIPK protein lead to the activation of the kinase in a calcium-dependent manner. May function as a positive regulator of salt or drought responses. This chain is Calcineurin B-like protein 5 (CBL5), found in Arabidopsis thaliana (Mouse-ear cress).